The chain runs to 236 residues: Orotidine 5'-phosphate decarboxylase (236 aa).

Residues aspartate 14, lysine 36, 63-72 (DLKYHDIPNT), threonine 122, arginine 183, glutamine 192, glycine 212, and arginine 213 contribute to the substrate site. Lysine 65 serves as the catalytic Proton donor.

This sequence belongs to the OMP decarboxylase family. Type 1 subfamily. In terms of assembly, homodimer.

The enzyme catalyses orotidine 5'-phosphate + H(+) = UMP + CO2. It functions in the pathway pyrimidine metabolism; UMP biosynthesis via de novo pathway; UMP from orotate: step 2/2. Functionally, catalyzes the decarboxylation of orotidine 5'-monophosphate (OMP) to uridine 5'-monophosphate (UMP). This is Orotidine 5'-phosphate decarboxylase from Halorhodospira halophila (strain DSM 244 / SL1) (Ectothiorhodospira halophila (strain DSM 244 / SL1)).